Reading from the N-terminus, the 84-residue chain is MFTLKKPLLLIVLLGIISLSLCEQERNADEDEESETKRGIFTKINKKKAKTGVFNIIKTIGKEAGMDVIRAGIDTISCKIKGEC.

Residues 1-22 (MFTLKKPLLLIVLLGIISLSLC) form the signal peptide. Residues 23–36 (EQERNADEDEESET) constitute a propeptide that is removed on maturation. A disulfide bridge links cysteine 78 with cysteine 84.

Expressed by the skin glands.

The protein localises to the secreted. Its function is as follows. Antimicrobial peptide. The polypeptide is Esculentin-1Vb (Odorrana versabilis (Chinese bamboo leaf odorous frog)).